We begin with the raw amino-acid sequence, 618 residues long: ADP,ATP carrier protein 2, chloroplastic (618 aa).

Residues 1–76 (MEGLIQTRGI…KERSRGFICK (76 aa)) constitute a chloroplast transit peptide. An N-acetylalanine modification is found at A77. 11 helical membrane passes run 110 to 130 (LKKIVPLGLMFFCILFNYTIL), 148 to 168 (IIPFLKTWVNLPMAIGFMLLY), 179 to 199 (ALFYTVIVPFIVYFGAFGFVM), 237 to 257 (LFYVMAELWGSVVVSVLFWGF), 270 to 289 (FYPLFGLGANVALIFSGRTV), 312 to 332 (AMMSIVVGMGLAICFLYWWVN), 368 to 388 (LATLVVAYGISINLVEVTWKS), 401 to 421 (SAFMGDFSTCTGIATFTMMLL), 441 to 461 (VLLLTGVAFFSLILFGGPFAP), 464 to 484 (AKLGMTPLLAAVYVGALQNIF), and 542 to 562 (LANSTPYLGVILLGIVTAWLA). The segment at 586–618 (RASSVKIPVVSQEDAPSGETTSQLSEKSTPTGI) is disordered. Over residues 603–618 (GETTSQLSEKSTPTGI) the composition is skewed to polar residues.

Belongs to the ADP/ATP translocase tlc (TC 2.A.12.2) family.

It localises to the plastid. Its subcellular location is the chloroplast membrane. The chain is ADP,ATP carrier protein 2, chloroplastic (AATP2) from Arabidopsis thaliana (Mouse-ear cress).